Reading from the N-terminus, the 513-residue chain is Histidine ammonia-lyase (513 aa).

The segment at residues 146–148 (ASG) is a cross-link (5-imidazolinone (Ala-Gly)). 2,3-didehydroalanine (Ser) is present on S147.

It belongs to the PAL/histidase family. In terms of processing, contains an active site 4-methylidene-imidazol-5-one (MIO), which is formed autocatalytically by cyclization and dehydration of residues Ala-Ser-Gly.

The protein localises to the cytoplasm. The enzyme catalyses L-histidine = trans-urocanate + NH4(+). It functions in the pathway amino-acid degradation; L-histidine degradation into L-glutamate; N-formimidoyl-L-glutamate from L-histidine: step 1/3. This Caulobacter vibrioides (strain NA1000 / CB15N) (Caulobacter crescentus) protein is Histidine ammonia-lyase.